The sequence spans 581 residues: Intermediate filament protein ifa-2 (581 aa).

2 disordered regions span residues 1–35 (MTDP…GSGN) and 47–68 (SSVS…RDNR). Residues 1–74 (MTDPDSYRSS…RDNREREKKE (74 aa)) are head. Residues 7–28 (YRSSITSRPSFNRTVTSSSQNY) show a composition bias toward polar residues. Residues 71–424 (EKKEIMELND…QMLEGNSEGN (354 aa)) form the IF rod domain. The segment at 75–106 (IMELNDRLASYIEKVRFLDAQNRKLDADLKML) is coil 1A. The tract at residues 107 to 120 (QGRFGKSTGSVKVM) is linker 1. The coil 1B stretch occupies residues 121-258 (YEMEITTATN…RGFETELKEL (138 aa)). A linker 12 region spans residues 259–276 (QAQAARDTTSENREYFKN). The tract at residues 277–424 (ELANAMRDIR…QMLEGNSEGN (148 aa)) is coil 2. The tract at residues 425–578 (GLRQLVEKVV…THIQRQSQQT (154 aa)) is tail. The disordered stretch occupies residues 449–469 (RVVKGEHSSRTSYQRSAKGNV). The 118-residue stretch at 457–574 (SRTSYQRSAK…EERATHIQRQ (118 aa)) folds into the LTD domain.

It belongs to the intermediate filament family. Forms some heteromeric filaments with ifb-1. As to expression, mainly expressed in regions of the hypodermis adjacent to muscle. Expressed in longitudinal stripes where the mechanosensory neurons interface with the hypodermis. Also expressed to the uterine seam and within the uterine-vulval cells.

The protein resides in the cell junction. Its subcellular location is the hemidesmosome. Functionally, cytoplasmic intermediate filaments provide mechanical strength to cells. Essential protein, involved in attachment structures in epidermal cells that connect muscles to the external cuticle. Probably acts by forming hypodermal hemidesmosome complexes that help mediate muscle-cuticle force transduction. Although expressed during embryogenesis, it is not required for embryonic development of muscle-cuticle linkages nor for the localization of other proteins to the hemidesmosomes in embryos. This Caenorhabditis elegans protein is Intermediate filament protein ifa-2.